Reading from the N-terminus, the 273-residue chain is 4-hydroxy-tetrahydrodipicolinate reductase (273 aa).

Residues 11-16 (GAGGRM) and glutamate 36 each bind NAD(+). Residue arginine 37 participates in NADP(+) binding. Residues 100–102 (GTT) and 124–127 (AANY) contribute to the NAD(+) site. Histidine 157 serves as the catalytic Proton donor/acceptor. Histidine 158 provides a ligand contact to (S)-2,3,4,5-tetrahydrodipicolinate. The active-site Proton donor is lysine 161. 167–168 (GT) contacts (S)-2,3,4,5-tetrahydrodipicolinate.

This sequence belongs to the DapB family.

The protein resides in the cytoplasm. The enzyme catalyses (S)-2,3,4,5-tetrahydrodipicolinate + NAD(+) + H2O = (2S,4S)-4-hydroxy-2,3,4,5-tetrahydrodipicolinate + NADH + H(+). It carries out the reaction (S)-2,3,4,5-tetrahydrodipicolinate + NADP(+) + H2O = (2S,4S)-4-hydroxy-2,3,4,5-tetrahydrodipicolinate + NADPH + H(+). It participates in amino-acid biosynthesis; L-lysine biosynthesis via DAP pathway; (S)-tetrahydrodipicolinate from L-aspartate: step 4/4. Its function is as follows. Catalyzes the conversion of 4-hydroxy-tetrahydrodipicolinate (HTPA) to tetrahydrodipicolinate. The protein is 4-hydroxy-tetrahydrodipicolinate reductase of Acinetobacter baylyi (strain ATCC 33305 / BD413 / ADP1).